The following is a 1401-amino-acid chain: Condensin complex subunit 1 (1401 aa).

Residues 1–603 (MAPQMYEFHL…TVCKNKPNMS (603 aa)) are interactions with SMC2 and SMC4. Phosphoserine occurs at positions 20 and 585. A compositionally biased stretch (polar residues) spans 576-596 (STQEKNPRESTGNMVTGQTVC). Disordered regions lie at residues 576-611 (STQEKNPRESTGNMVTGQTVCKNKPNMSDPEESRGN), 956-978 (REEQEHKTKDPKEKNTSSETTME), and 1303-1401 (LEIG…RHRS). Basic and acidic residues predominate over residues 956–971 (REEQEHKTKDPKEKNT). A compositionally biased stretch (polar residues) spans 1308-1336 (AGSQRAPSAKKPSTGSRYQPLASTASDND). Residues Ser-1310, Ser-1315, and Ser-1330 each carry the phosphoserine modification. At Thr-1331 the chain carries Phosphothreonine. Ser-1333 carries the post-translational modification Phosphoserine. Thr-1339 is modified (phosphothreonine). The short motif at 1342–1362 (PRRTTRRHPNTQQRASKKKPK) is the Bipartite nuclear localization signal element. Residues 1345 to 1362 (TTRRHPNTQQRASKKKPK) show a composition bias toward basic residues. A phosphoserine mark is found at Ser-1366, Ser-1367, Ser-1370, Ser-1371, and Ser-1376. Residues 1369 to 1382 (ESSEEDLSAEMTED) show a composition bias toward acidic residues. Phosphothreonine; by CDK1 is present on residues Thr-1384 and Thr-1389. At Ser-1395 the chain carries Phosphoserine.

Belongs to the CND1 (condensin subunit 1) family. In terms of assembly, component of the condensin complex, which contains the SMC2 and SMC4 heterodimer, and three non SMC subunits that probably regulate the complex: NCAPH/BRRN1, NCAPD2/CAPD2 and NCAPG. Interacts with histones H1 and H3. Phosphorylated by CDK1. Its phosphorylation, as well as that of NCAPH and NCAPG subunits, activates the condensin complex and is required for chromosome condensation.

Its subcellular location is the nucleus. It localises to the cytoplasm. The protein localises to the chromosome. Functionally, regulatory subunit of the condensin complex, a complex required for conversion of interphase chromatin into mitotic-like condense chromosomes. The condensin complex probably introduces positive supercoils into relaxed DNA in the presence of type I topoisomerases and converts nicked DNA into positive knotted forms in the presence of type II topoisomerases. May target the condensin complex to DNA via its C-terminal domain. May promote the resolution of double-strand DNA catenanes (intertwines) between sister chromatids. Condensin-mediated compaction likely increases tension in catenated sister chromatids, providing directionality for type II topoisomerase-mediated strand exchanges toward chromatid decatenation. Required for decatenation of non-centromeric ultrafine DNA bridges during anaphase. Early in neurogenesis, may play an essential role to ensure accurate mitotic chromosome condensation in neuron stem cells, ultimately affecting neuron pool and cortex size. The polypeptide is Condensin complex subunit 1 (Homo sapiens (Human)).